A 338-amino-acid polypeptide reads, in one-letter code: ABC transporter I family member 6, chloroplastic (338 aa).

The transit peptide at 1 to 66 (MAGVNLQLRH…RTTRRSVIVS (66 aa)) directs the protein to the chloroplast. In terms of domain architecture, ABC transporter spans 92–338 (LEVRDLRAVI…EKEGYKAISG (247 aa)). 126-133 (GKNGSGKS) provides a ligand contact to ATP.

This sequence belongs to the ABC transporter superfamily. ABCI family. As to quaternary structure, interacts with NAP6. In terms of tissue distribution, present in all organs, with higher levels in aerial parts.

The protein resides in the plastid. The protein localises to the chloroplast. In terms of biological role, essential protein. Required during embryo development, especially at early stages. Involved in chloroplast differentiation. The protein is ABC transporter I family member 6, chloroplastic (ABCI6) of Arabidopsis thaliana (Mouse-ear cress).